A 267-amino-acid chain; its full sequence is Undecaprenyl-diphosphatase (267 aa).

A run of 8 helical transmembrane segments spans residues 5-25 (TIVA…PVSS), 45-65 (FEVL…AGRL), 82-102 (ILAV…AHRI), 108-128 (FETP…LLFV), 143-163 (FPLP…IPGV), 183-203 (AAEF…VYDL), 213-233 (AATG…VVVV), and 243-263 (YGYG…LLAL).

Belongs to the UppP family.

It is found in the cell inner membrane. The enzyme catalyses di-trans,octa-cis-undecaprenyl diphosphate + H2O = di-trans,octa-cis-undecaprenyl phosphate + phosphate + H(+). Functionally, catalyzes the dephosphorylation of undecaprenyl diphosphate (UPP). Confers resistance to bacitracin. The protein is Undecaprenyl-diphosphatase of Paracoccus denitrificans (strain Pd 1222).